Reading from the N-terminus, the 313-residue chain is Ribosomal RNA small subunit methyltransferase H (313 aa).

S-adenosyl-L-methionine is bound by residues Gly35–His37, Asp55, Phe79, Asp101, and Gln108.

The protein belongs to the methyltransferase superfamily. RsmH family.

It localises to the cytoplasm. The enzyme catalyses cytidine(1402) in 16S rRNA + S-adenosyl-L-methionine = N(4)-methylcytidine(1402) in 16S rRNA + S-adenosyl-L-homocysteine + H(+). In terms of biological role, specifically methylates the N4 position of cytidine in position 1402 (C1402) of 16S rRNA. The protein is Ribosomal RNA small subunit methyltransferase H of Shigella dysenteriae serotype 1 (strain Sd197).